The chain runs to 303 residues: Plasmodesmata-located protein 1 (303 aa).

The signal sequence occupies residues 1–21 (MKLTYQFFIFWFFLPFFAISG). The Extracellular portion of the chain corresponds to 22–268 (DDDYKNLIFK…GEKRQHTERT (247 aa)). 2 consecutive Gnk2-homologous domains span residues 27-136 (NLIF…SSGF) and 141-248 (GTEM…YYSH). Cystine bridges form between C33–C108, C84–C93, C96–C127, C149–C226, C202–C211, and C214–C239. A helical membrane pass occupies residues 269–289 (IALAVGGVFVLGFVIVCLLVL). A necessary and sufficient for plasmodesmal targeting region spans residues 269-289 (IALAVGGVFVLGFVIVCLLVL). Over 290 to 303 (RSAMKKKSNKYDAY) the chain is Cytoplasmic.

Belongs to the cysteine-rich repeat secretory protein family. Plasmodesmata-located proteins (PDLD) subfamily. As to quaternary structure, interacts with AZI1. Interacts with PDLP5. Does not interact with DIR1. (Microbial infection) Interacts with Grapevine fanleaf virus (GFLV) 2B-MP. Interacts with Cauliflower mosaic virus (CaMV) movement protein. As to expression, highly expressed in cell suspension. Expressed in epidermal and spongy mesophyll cells, and the cell wall interface at the base of the leaf trichome (at protein level). Expressed in haustoria-containing cells.

It is found in the cell membrane. It localises to the cell junction. The protein localises to the plasmodesma. Functionally, modulates cell-to-cell trafficking. Required for systemic acquired resistance (SAR) which is mediated by the signaling molecules azelaic acid (AzA), glycerol-3-phosphate (G3P), and salicylic acid (SA). Required for the proper localization and stability of AZI1 which is involved in SAR. Mediates callose deposition during downy mildew fungal infection around haustoria. Haustoria are unicellular protrusions from hyphae and function as the site of molecular exchange of nutrients and effectors between host and pathogen. The sequence is that of Plasmodesmata-located protein 1 from Arabidopsis thaliana (Mouse-ear cress).